Reading from the N-terminus, the 332-residue chain is Monoterpene synthase 25 (332 aa).

The Mg(2+) site is built by Asp-115, Glu-180, Asn-240, Ser-244, and Glu-248. Positions 115–121 (DDPVVFD) match the DDXXXXD motif motif. Residues 240 to 248 (NDILSFYKE) carry the NSE/DTE motif motif.

Belongs to the trichodiene synthase family. Requires Mg(2+) as cofactor.

Its function is as follows. Terpene cyclase that catalyzes the cyclization of geranyl diphosphate (GPP) to myrcene and linalool. The chain is Monoterpene synthase 25 from Postia placenta (strain ATCC 44394 / Madison 698-R) (Brown rot fungus).